The chain runs to 269 residues: MTRIAIVGVAGRMGRTLVNAVQQDPEASLGGGIVEPGSSLVGADLGELAGVGRLGVNATDDPAAIADAFDVLIDFTAPRVTLANLAFCAEHGKAIVIGTTGLSDDELAELDGYRERVPMVFAPNMSVGVNLTLKLLETAARALGDEGYDIEVSEAHHRHKVDAPSGTALKMGEVVAKALSRDLKEDGVFERVGQCGPRGDKEIGFATVRAGDIVGEHTVMFATEGERIEITHKASSRMTFAKGAVRAARWVASRGNGRYDMQDVLGLKG.

NAD(+)-binding positions include 8–13 (GVAGRM), 98–100 (GTT), and 122–125 (APNM). H156 functions as the Proton donor/acceptor in the catalytic mechanism. H157 contacts (S)-2,3,4,5-tetrahydrodipicolinate. The Proton donor role is filled by K160. A (S)-2,3,4,5-tetrahydrodipicolinate-binding site is contributed by 166–167 (GT).

This sequence belongs to the DapB family.

It is found in the cytoplasm. It catalyses the reaction (S)-2,3,4,5-tetrahydrodipicolinate + NAD(+) + H2O = (2S,4S)-4-hydroxy-2,3,4,5-tetrahydrodipicolinate + NADH + H(+). The catalysed reaction is (S)-2,3,4,5-tetrahydrodipicolinate + NADP(+) + H2O = (2S,4S)-4-hydroxy-2,3,4,5-tetrahydrodipicolinate + NADPH + H(+). It functions in the pathway amino-acid biosynthesis; L-lysine biosynthesis via DAP pathway; (S)-tetrahydrodipicolinate from L-aspartate: step 4/4. Its function is as follows. Catalyzes the conversion of 4-hydroxy-tetrahydrodipicolinate (HTPA) to tetrahydrodipicolinate. The protein is 4-hydroxy-tetrahydrodipicolinate reductase of Chromohalobacter salexigens (strain ATCC BAA-138 / DSM 3043 / CIP 106854 / NCIMB 13768 / 1H11).